The primary structure comprises 273 residues: Undecaprenyl-diphosphatase (273 aa).

Transmembrane regions (helical) follow at residues 46-63 (LFEV…CWEY), 83-103 (FVLN…LAGK), 109-129 (LFNS…ILWV), 184-204 (ATEF…AYDL), 218-238 (AFGI…RGLL), and 249-269 (FAWY…YGLV).

This sequence belongs to the UppP family.

The protein resides in the cell inner membrane. It catalyses the reaction di-trans,octa-cis-undecaprenyl diphosphate + H2O = di-trans,octa-cis-undecaprenyl phosphate + phosphate + H(+). Functionally, catalyzes the dephosphorylation of undecaprenyl diphosphate (UPP). Confers resistance to bacitracin. This is Undecaprenyl-diphosphatase from Methylococcus capsulatus (strain ATCC 33009 / NCIMB 11132 / Bath).